The following is a 195-amino-acid chain: Probable GTP-binding protein EngB (195 aa).

Positions 22 to 194 constitute an EngB-type G domain; sequence LKGEVAFVGR…LDLISTLLKE (173 aa). GTP-binding positions include 30–37, 56–60, 74–77, 141–144, and 173–175; these read GRSNVGKS, GKTRS, DLPG, TKMD, and TSS. 2 residues coordinate Mg(2+): serine 37 and threonine 58.

The protein belongs to the TRAFAC class TrmE-Era-EngA-EngB-Septin-like GTPase superfamily. EngB GTPase family. It depends on Mg(2+) as a cofactor.

In terms of biological role, necessary for normal cell division and for the maintenance of normal septation. The sequence is that of Probable GTP-binding protein EngB from Thermotoga maritima (strain ATCC 43589 / DSM 3109 / JCM 10099 / NBRC 100826 / MSB8).